Here is a 180-residue protein sequence, read N- to C-terminus: Ribulose bisphosphate carboxylase small subunit, chloroplastic 5 (180 aa).

A chloroplast-targeting transit peptide spans 1 to 56; that stretch reads MASSVMSSAAVATRGNGAQASMVAPFTGLKSTASFPVSRKQNLDITSIASNGGRVR.

Belongs to the RuBisCO small chain family. Heterohexadecamer of 8 large and 8 small subunits.

Its subcellular location is the plastid. It is found in the chloroplast. In terms of biological role, ruBisCO catalyzes two reactions: the carboxylation of D-ribulose 1,5-bisphosphate, the primary event in carbon dioxide fixation, as well as the oxidative fragmentation of the pentose substrate. Both reactions occur simultaneously and in competition at the same active site. Although the small subunit is not catalytic it is essential for maximal activity. This chain is Ribulose bisphosphate carboxylase small subunit, chloroplastic 5, found in Solanum tuberosum (Potato).